The primary structure comprises 644 residues: Exoribonuclease 2 (644 aa).

An RNB domain is found at 189 to 516 (RQDLTALNFV…NHRLLKAVIK (328 aa)). An S1 motif domain is found at 561 to 643 (NTRFAAEIID…ETRSIIARPA (83 aa)).

This sequence belongs to the RNR ribonuclease family. RNase II subfamily.

It is found in the cytoplasm. The catalysed reaction is Exonucleolytic cleavage in the 3'- to 5'-direction to yield nucleoside 5'-phosphates.. Involved in mRNA degradation. Hydrolyzes single-stranded polyribonucleotides processively in the 3' to 5' direction. This Salmonella agona (strain SL483) protein is Exoribonuclease 2.